A 251-amino-acid chain; its full sequence is Gamma-glutamyl peptidase 5 (251 aa).

The 198-residue stretch at 17-214 folds into the Glutamine amidotransferase type-1 domain; it reads STFVKKAYGG…IDRVVNLKLM (198 aa). Cys101 (nucleophile) is an active-site residue. Catalysis depends on residues His193 and Glu195.

The protein belongs to the peptidase C26 family.

It is found in the cytoplasm. Its subcellular location is the cytosol. The protein operates within secondary metabolite biosynthesis. Involved in glucosinolate biosynthesis. Hydrolyzes the gamma-glutamyl peptide bond of several glutathione (GSH) conjugates to produce Cys-Gly conjugates related to glucosinolates. The gamma-Glu-Cys-Gly-GSH conjugates are the sulfur-donating molecule in glucosinolate biosynthesis. The polypeptide is Gamma-glutamyl peptidase 5 (Arabidopsis thaliana (Mouse-ear cress)).